The primary structure comprises 264 residues: Pyridoxine 5'-phosphate synthase (264 aa).

3-amino-2-oxopropyl phosphate is bound at residue asparagine 28. Residue 30–31 (DH) coordinates 1-deoxy-D-xylulose 5-phosphate. Position 39 (arginine 39) interacts with 3-amino-2-oxopropyl phosphate. Histidine 64 acts as the Proton acceptor in catalysis. The 1-deoxy-D-xylulose 5-phosphate site is built by arginine 66 and histidine 71. The active-site Proton acceptor is glutamate 91. Residue threonine 121 coordinates 1-deoxy-D-xylulose 5-phosphate. Residue histidine 217 is the Proton donor of the active site. 3-amino-2-oxopropyl phosphate-binding positions include glycine 218 and 239-240 (GH).

This sequence belongs to the PNP synthase family. Homooctamer; tetramer of dimers.

It localises to the cytoplasm. It catalyses the reaction 3-amino-2-oxopropyl phosphate + 1-deoxy-D-xylulose 5-phosphate = pyridoxine 5'-phosphate + phosphate + 2 H2O + H(+). It participates in cofactor biosynthesis; pyridoxine 5'-phosphate biosynthesis; pyridoxine 5'-phosphate from D-erythrose 4-phosphate: step 5/5. Functionally, catalyzes the complicated ring closure reaction between the two acyclic compounds 1-deoxy-D-xylulose-5-phosphate (DXP) and 3-amino-2-oxopropyl phosphate (1-amino-acetone-3-phosphate or AAP) to form pyridoxine 5'-phosphate (PNP) and inorganic phosphate. This chain is Pyridoxine 5'-phosphate synthase, found in Psychrobacter arcticus (strain DSM 17307 / VKM B-2377 / 273-4).